The primary structure comprises 487 residues: ATP synthase subunit beta (487 aa).

164–171 (GGAGVGKT) is a binding site for ATP.

It belongs to the ATPase alpha/beta chains family. In terms of assembly, F-type ATPases have 2 components, CF(1) - the catalytic core - and CF(0) - the membrane proton channel. CF(1) has five subunits: alpha(3), beta(3), gamma(1), delta(1), epsilon(1). CF(0) has four main subunits: a(1), b(1), b'(1) and c(9-12).

The protein resides in the cellular thylakoid membrane. The enzyme catalyses ATP + H2O + 4 H(+)(in) = ADP + phosphate + 5 H(+)(out). Functionally, produces ATP from ADP in the presence of a proton gradient across the membrane. The catalytic sites are hosted primarily by the beta subunits. The polypeptide is ATP synthase subunit beta (Synechococcus sp. (strain CC9605)).